The sequence spans 346 residues: tRNA N6-adenosine threonylcarbamoyltransferase (346 aa).

Histidine 111 and histidine 115 together coordinate Fe cation. Residues 134–138, aspartate 167, glycine 180, aspartate 184, and asparagine 279 contribute to the substrate site; that span reads LVSGG. Aspartate 307 serves as a coordination point for Fe cation.

Belongs to the KAE1 / TsaD family. Requires Fe(2+) as cofactor.

The protein localises to the cytoplasm. The enzyme catalyses L-threonylcarbamoyladenylate + adenosine(37) in tRNA = N(6)-L-threonylcarbamoyladenosine(37) in tRNA + AMP + H(+). Functionally, required for the formation of a threonylcarbamoyl group on adenosine at position 37 (t(6)A37) in tRNAs that read codons beginning with adenine. Is involved in the transfer of the threonylcarbamoyl moiety of threonylcarbamoyl-AMP (TC-AMP) to the N6 group of A37, together with TsaE and TsaB. TsaD likely plays a direct catalytic role in this reaction. This is tRNA N6-adenosine threonylcarbamoyltransferase from Nostoc sp. (strain PCC 7120 / SAG 25.82 / UTEX 2576).